We begin with the raw amino-acid sequence, 660 residues long: Bifunctional polymyxin resistance protein ArnA (660 aa).

The formyltransferase ArnAFT stretch occupies residues 1 to 304 (MKTVVFAYHD…TLGLVQGSRL (304 aa)). A (6R)-10-formyltetrahydrofolate-binding site is contributed by 86–88 (HLI). His-104 (proton donor; for formyltransferase activity) is an active-site residue. (6R)-10-formyltetrahydrofolate-binding positions include Arg-114 and 136–140 (VKRAD). The dehydrogenase ArnADH stretch occupies residues 314-660 (RRTRVLILGV…RTVDLTDKPS (347 aa)). NAD(+) is bound by residues Asp-347 and 368-369 (DI). UDP-alpha-D-glucuronate-binding positions include Ala-393, Tyr-398, and 432-433 (TS). Residue Glu-434 is the Proton acceptor; for decarboxylase activity of the active site. Residues Arg-460, Asn-492, 526–535 (KLIDGGKQKR), and Tyr-613 contribute to the UDP-alpha-D-glucuronate site. Arg-619 serves as the catalytic Proton donor; for decarboxylase activity.

In the N-terminal section; belongs to the Fmt family. UDP-L-Ara4N formyltransferase subfamily. It in the C-terminal section; belongs to the NAD(P)-dependent epimerase/dehydratase family. UDP-glucuronic acid decarboxylase subfamily. In terms of assembly, homohexamer, formed by a dimer of trimers.

It carries out the reaction UDP-alpha-D-glucuronate + NAD(+) = UDP-beta-L-threo-pentopyranos-4-ulose + CO2 + NADH. It catalyses the reaction UDP-4-amino-4-deoxy-beta-L-arabinose + (6R)-10-formyltetrahydrofolate = UDP-4-deoxy-4-formamido-beta-L-arabinose + (6S)-5,6,7,8-tetrahydrofolate + H(+). The protein operates within nucleotide-sugar biosynthesis; UDP-4-deoxy-4-formamido-beta-L-arabinose biosynthesis; UDP-4-deoxy-4-formamido-beta-L-arabinose from UDP-alpha-D-glucuronate: step 1/3. It functions in the pathway nucleotide-sugar biosynthesis; UDP-4-deoxy-4-formamido-beta-L-arabinose biosynthesis; UDP-4-deoxy-4-formamido-beta-L-arabinose from UDP-alpha-D-glucuronate: step 3/3. It participates in bacterial outer membrane biogenesis; lipopolysaccharide biosynthesis. Bifunctional enzyme that catalyzes the oxidative decarboxylation of UDP-glucuronic acid (UDP-GlcUA) to UDP-4-keto-arabinose (UDP-Ara4O) and the addition of a formyl group to UDP-4-amino-4-deoxy-L-arabinose (UDP-L-Ara4N) to form UDP-L-4-formamido-arabinose (UDP-L-Ara4FN). The modified arabinose is attached to lipid A and is required for resistance to polymyxin and cationic antimicrobial peptides. This chain is Bifunctional polymyxin resistance protein ArnA, found in Escherichia coli O1:K1 / APEC.